Here is a 275-residue protein sequence, read N- to C-terminus: Adenosylcobinamide-GDP ribazoletransferase (275 aa).

6 consecutive transmembrane segments (helical) span residues 52–72 (VVGVVFGVLTAVLLGLLGVLG), 73–93 (VTPLLTAVLVVIMWELLNRMM), 126–146 (MGFSAVLFSLLVQVTAVAALV), 181–201 (FGAMVVGTVRLWWVAAWLVAL), 208–228 (VAVWAAGPAVVWIVPAAGIIA), and 251–271 (IGAGIHLSAAVVAVFCAVAVA).

Belongs to the CobS family. Mg(2+) serves as cofactor.

The protein localises to the cell membrane. It catalyses the reaction alpha-ribazole + adenosylcob(III)inamide-GDP = adenosylcob(III)alamin + GMP + H(+). It carries out the reaction alpha-ribazole 5'-phosphate + adenosylcob(III)inamide-GDP = adenosylcob(III)alamin 5'-phosphate + GMP + H(+). It functions in the pathway cofactor biosynthesis; adenosylcobalamin biosynthesis; adenosylcobalamin from cob(II)yrinate a,c-diamide: step 7/7. Its function is as follows. Joins adenosylcobinamide-GDP and alpha-ribazole to generate adenosylcobalamin (Ado-cobalamin). Also synthesizes adenosylcobalamin 5'-phosphate from adenosylcobinamide-GDP and alpha-ribazole 5'-phosphate. The chain is Adenosylcobinamide-GDP ribazoletransferase from Corynebacterium efficiens (strain DSM 44549 / YS-314 / AJ 12310 / JCM 11189 / NBRC 100395).